The primary structure comprises 369 residues: Septin-5 (369 aa).

Phosphothreonine is present on T13. The 274-residue stretch at 41–314 folds into the Septin-type G domain; sequence KGFDFTLMVA…ENYRAHCIQQ (274 aa). Positions 51 to 58 are G1 motif; it reads GESGLGKS. GTP-binding positions include 51 to 58, T85, and G111; that span reads GESGLGKS. Residues 108–111 are G3 motif; sequence DTPG. R168 carries the post-translational modification Omega-N-methylarginine. The interval 189 to 192 is G4 motif; that stretch reads AKAD. A GTP-binding site is contributed by 190-198; that stretch reads KADCLVPSE. S225 is subject to Phosphoserine. The GTP site is built by G248 and R263. Phosphoserine is present on S327. The residue at position 336 (T336) is a Phosphothreonine. The stretch at 338–369 forms a coiled coil; it reads DAETEKLIRMKDEELRRMQEMLQKMKQQMQDQ.

Belongs to the TRAFAC class TrmE-Era-EngA-EngB-Septin-like GTPase superfamily. Septin GTPase family. In terms of assembly, septins polymerize into heterooligomeric protein complexes that form filaments, and can associate with cellular membranes, actin filaments and microtubules. GTPase activity is required for filament formation. Interacts with SEPTIN2 and SEPTIN5. Interaction with SEPTIN4 not detected. In platelets, associated with a complex containing STX4. Interacts with PRKN; this interaction leads to SEPTIN5 ubiquitination and degradation. Interacts with DYRK1A. Interacts with STX1A; in the cerebellar cortex. Phosphorylated by DYRK1A.

The protein localises to the cytoplasm. Its subcellular location is the cytoskeleton. Filament-forming cytoskeletal GTPase. Involved in cytokinesis (Potential). May play a role in platelet secretion. The polypeptide is Septin-5 (Mus musculus (Mouse)).